The sequence spans 407 residues: Arrestin domain-containing protein 2 (407 aa).

Belongs to the arrestin family. In terms of assembly, interacts with WWP1 (via WW domains).

In Mus musculus (Mouse), this protein is Arrestin domain-containing protein 2 (Arrdc2).